Reading from the N-terminus, the 101-residue chain is uncharacterized protein (101 aa).

Over residues 1 to 11 the composition is skewed to basic and acidic residues; the sequence is MSDEGYRELVE. The segment at 1–26 is disordered; it reads MSDEGYRELVESKSAPTTPGPWSPDR.

This is an uncharacterized protein from Torque teno canis virus (isolate Cf-TTV10).